A 362-amino-acid chain; its full sequence is D-alanine--D-alanine ligase (362 aa).

In terms of domain architecture, ATP-grasp spans 153–357 (KKIAREAGIP…YADLLTTLVS (205 aa)). Residue 180–235 (RELLGLPVFVKPARGGSSIGISKVDSWRDLPAAIEEAASHDPKVIIEAMITGPEVE) participates in ATP binding. Asp-312, Glu-324, and Asn-326 together coordinate Mg(2+).

This sequence belongs to the D-alanine--D-alanine ligase family. Requires Mg(2+) as cofactor. The cofactor is Mn(2+).

Its subcellular location is the cytoplasm. The catalysed reaction is 2 D-alanine + ATP = D-alanyl-D-alanine + ADP + phosphate + H(+). It functions in the pathway cell wall biogenesis; peptidoglycan biosynthesis. Functionally, cell wall formation. This Corynebacterium urealyticum (strain ATCC 43042 / DSM 7109) protein is D-alanine--D-alanine ligase.